Reading from the N-terminus, the 445-residue chain is Phosphoglucosamine mutase (445 aa).

S102 (phosphoserine intermediate) is an active-site residue. The Mg(2+) site is built by S102, D241, D243, and D245. S102 bears the Phosphoserine mark.

It belongs to the phosphohexose mutase family. Requires Mg(2+) as cofactor. Post-translationally, activated by phosphorylation.

It catalyses the reaction alpha-D-glucosamine 1-phosphate = D-glucosamine 6-phosphate. Its function is as follows. Catalyzes the conversion of glucosamine-6-phosphate to glucosamine-1-phosphate. In Sodalis glossinidius (strain morsitans), this protein is Phosphoglucosamine mutase.